Here is a 213-residue protein sequence, read N- to C-terminus: Receptor-binding cancer antigen expressed on SiSo cells (213 aa).

At 1 to 7 the chain is on the extracellular side; the sequence is MAITQFR. Residues 8 to 27 form a helical; Signal-anchor for type III membrane protein membrane-spanning segment; sequence LFKVCTCLATVFSFLKRLIC. The Cytoplasmic portion of the chain corresponds to 28-213; it reads RSGRGRKLSG…EQNKIGVKLS (186 aa). Residue Ser36 is modified to Phosphoserine. Residue Thr41 is modified to Phosphothreonine. A Phosphotyrosine modification is found at Tyr94. A coiled-coil region spans residues 163 to 211; the sequence is EDAAWQAEEVLRQQKIADREKRAAEQQRKKMEKEAQRLMKKEQNKIGVK. Residues 179–206 show a composition bias toward basic and acidic residues; it reads ADREKRAAEQQRKKMEKEAQRLMKKEQN. The segment at 179-213 is disordered; sequence ADREKRAAEQQRKKMEKEAQRLMKKEQNKIGVKLS.

Homodimer. Widely expressed. Expressed in heart, brain, spleen, liver, kidney and testis.

It is found in the golgi apparatus membrane. Its function is as follows. May participate in suppression of cell proliferation and induces apoptotic cell death through activation of interleukin-1-beta converting enzyme (ICE)-like proteases. This is Receptor-binding cancer antigen expressed on SiSo cells (Ebag9) from Mus musculus (Mouse).